Reading from the N-terminus, the 227-residue chain is Cytochrome c oxidase subunit 2 (227 aa).

Topologically, residues 1–14 are mitochondrial intermembrane; that stretch reads MAYPMQLGFQDATS. A helical membrane pass occupies residues 15 to 45; the sequence is PIMEELLHFHDHTLMIVFLISSLVLYIISLM. Over 46-59 the chain is Mitochondrial matrix; sequence LTTKLTHTSTMDAQ. The helical transmembrane segment at 60 to 87 threads the bilayer; that stretch reads EVETIWTILPAIILILIALPSLRILYMM. At 88–227 the chain is on the mitochondrial intermembrane side; the sequence is DEINNPSLTV…YFEKWSASML (140 aa). Residues His-161, Cys-196, Glu-198, Cys-200, His-204, and Met-207 each contribute to the Cu cation site. Glu-198 lines the Mg(2+) pocket. At Tyr-218 the chain carries Phosphotyrosine.

The protein belongs to the cytochrome c oxidase subunit 2 family. In terms of assembly, component of the cytochrome c oxidase (complex IV, CIV), a multisubunit enzyme composed of 14 subunits. The complex is composed of a catalytic core of 3 subunits MT-CO1, MT-CO2 and MT-CO3, encoded in the mitochondrial DNA, and 11 supernumerary subunits COX4I, COX5A, COX5B, COX6A, COX6B, COX6C, COX7A, COX7B, COX7C, COX8 and NDUFA4, which are encoded in the nuclear genome. The complex exists as a monomer or a dimer and forms supercomplexes (SCs) in the inner mitochondrial membrane with NADH-ubiquinone oxidoreductase (complex I, CI) and ubiquinol-cytochrome c oxidoreductase (cytochrome b-c1 complex, complex III, CIII), resulting in different assemblies (supercomplex SCI(1)III(2)IV(1) and megacomplex MCI(2)III(2)IV(2)). Found in a complex with TMEM177, COA6, COX18, COX20, SCO1 and SCO2. Interacts with TMEM177 in a COX20-dependent manner. Interacts with COX20. Interacts with COX16. The cofactor is Cu cation.

The protein localises to the mitochondrion inner membrane. The enzyme catalyses 4 Fe(II)-[cytochrome c] + O2 + 8 H(+)(in) = 4 Fe(III)-[cytochrome c] + 2 H2O + 4 H(+)(out). Component of the cytochrome c oxidase, the last enzyme in the mitochondrial electron transport chain which drives oxidative phosphorylation. The respiratory chain contains 3 multisubunit complexes succinate dehydrogenase (complex II, CII), ubiquinol-cytochrome c oxidoreductase (cytochrome b-c1 complex, complex III, CIII) and cytochrome c oxidase (complex IV, CIV), that cooperate to transfer electrons derived from NADH and succinate to molecular oxygen, creating an electrochemical gradient over the inner membrane that drives transmembrane transport and the ATP synthase. Cytochrome c oxidase is the component of the respiratory chain that catalyzes the reduction of oxygen to water. Electrons originating from reduced cytochrome c in the intermembrane space (IMS) are transferred via the dinuclear copper A center (CU(A)) of subunit 2 and heme A of subunit 1 to the active site in subunit 1, a binuclear center (BNC) formed by heme A3 and copper B (CU(B)). The BNC reduces molecular oxygen to 2 water molecules using 4 electrons from cytochrome c in the IMS and 4 protons from the mitochondrial matrix. The polypeptide is Cytochrome c oxidase subunit 2 (MT-CO2) (Bison bonasus (European bison)).